The sequence spans 101 residues: Putative pterin-4-alpha-carbinolamine dehydratase (101 aa).

Belongs to the pterin-4-alpha-carbinolamine dehydratase family.

The enzyme catalyses (4aS,6R)-4a-hydroxy-L-erythro-5,6,7,8-tetrahydrobiopterin = (6R)-L-erythro-6,7-dihydrobiopterin + H2O. This Rhodopseudomonas palustris (strain BisB18) protein is Putative pterin-4-alpha-carbinolamine dehydratase.